We begin with the raw amino-acid sequence, 284 residues long: 16S rRNA (guanine(1405)-N(7))-methyltransferase (284 aa).

S-adenosyl-L-methionine is bound by residues Tyr73, His111 to Ser113, Arg117, Ala142, Asp165, Asp191 to Leu192, Leu208, and Gln217.

Belongs to the methyltransferase superfamily. Aminoglycoside resistance family.

The enzyme catalyses guanosine(1405) in 16S rRNA + S-adenosyl-L-methionine = N(7)-methylguanosine(1405) in 16S rRNA + S-adenosyl-L-homocysteine. Its function is as follows. Specifically methylates the N(7) position of guanine 1405 in 16S rRNA. Confers resistance to various aminoglycosides, including gentamicin and kanamycin. The sequence is that of 16S rRNA (guanine(1405)-N(7))-methyltransferase (Krm) from Frankia casuarinae (strain DSM 45818 / CECT 9043 / HFP020203 / CcI3).